A 134-amino-acid polypeptide reads, in one-letter code: Large ribosomal subunit protein bL20 (134 aa).

This sequence belongs to the bacterial ribosomal protein bL20 family.

In terms of biological role, binds directly to 23S ribosomal RNA and is necessary for the in vitro assembly process of the 50S ribosomal subunit. It is not involved in the protein synthesizing functions of that subunit. The polypeptide is Large ribosomal subunit protein bL20 (Rhizobium meliloti (strain 1021) (Ensifer meliloti)).